The primary structure comprises 387 residues: MSVIKMTDLDLAGKRVLIRADLNVPVKDGKVTSDARIRASLPTIEAALKQGAKVMITSHLGRPIEGEYNEEFSLKPVVDYLKEKLSSSVRLEKEYLEGVEVSEGELVVLENVRFNKGEKKDDESLAKKYASLCDIYVMDAFGTAHRAQASTHGVAKFAPVACAGPLLFGELEALGKALDNPARPMVAIVGGSKVSTKLTVLDTLSKIADQLIVGGGIANTFVAAEGHNVGRSLYEDDLIPEAKKLLISCDIPVPTDVRVATEFSETAEATLKSSSDIKDDEQILDLGDESAQRLADILKNAKTILWNGPVGVFEFPNFRQGTEIVARAIADSDAFSIAGGGDTLAAIDLFGIADKISYISTGGGAFLEFVEGKKLPAVVMLEERAKQ.

Substrate-binding positions include D21–N23, R36, H59–R62, R113, and R146. ATP contacts are provided by residues K197, E314, and G340–T343.

This sequence belongs to the phosphoglycerate kinase family. In terms of assembly, monomer.

The protein resides in the cytoplasm. The enzyme catalyses (2R)-3-phosphoglycerate + ATP = (2R)-3-phospho-glyceroyl phosphate + ADP. The protein operates within carbohydrate degradation; glycolysis; pyruvate from D-glyceraldehyde 3-phosphate: step 2/5. This Photorhabdus luminescens (Xenorhabdus luminescens) protein is Phosphoglycerate kinase.